A 604-amino-acid chain; its full sequence is Uptake hydrogenase large subunit (604 aa).

Ni(2+) is bound by residues Cys76, Cys79, Cys583, and Cys586.

The protein belongs to the [NiFe]/[NiFeSe] hydrogenase large subunit family. In terms of assembly, heterodimer of a large and a small subunit. The cofactor is Ni(2+).

The protein resides in the cell membrane. It catalyses the reaction H2 + A = AH2. In terms of biological role, this enzyme recycles the H(2) produced by nitrogenase to increase the production of ATP and to protect nitrogenase against inhibition or damage by O(2) under carbon- or phosphate-limited conditions. The polypeptide is Uptake hydrogenase large subunit (hoxL) (Afipia carboxidovorans (strain ATCC 49405 / DSM 1227 / KCTC 32145 / OM5) (Oligotropha carboxidovorans)).